A 388-amino-acid chain; its full sequence is GTPase Obg (388 aa).

The region spanning 1 to 159 (MKFIDEASIR…RSLRLELLLL (159 aa)) is the Obg domain. In terms of domain architecture, OBG-type G spans 160–333 (ADVGLLGMPN…LSLKLLDYIA (174 aa)). Residues 166–173 (GMPNAGKS), 191–195 (FTTLV), 213–216 (DIPG), 283–286 (NKTD), and 314–316 (SAF) contribute to the GTP site. Mg(2+) is bound by residues Ser173 and Thr193.

This sequence belongs to the TRAFAC class OBG-HflX-like GTPase superfamily. OBG GTPase family. In terms of assembly, monomer. The cofactor is Mg(2+).

Its subcellular location is the cytoplasm. Its function is as follows. An essential GTPase which binds GTP, GDP and possibly (p)ppGpp with moderate affinity, with high nucleotide exchange rates and a fairly low GTP hydrolysis rate. Plays a role in control of the cell cycle, stress response, ribosome biogenesis and in those bacteria that undergo differentiation, in morphogenesis control. In Shewanella denitrificans (strain OS217 / ATCC BAA-1090 / DSM 15013), this protein is GTPase Obg.